The sequence spans 317 residues: 4-hydroxy-3-methylbut-2-enyl diphosphate reductase (317 aa).

Cys-12 serves as a coordination point for [4Fe-4S] cluster. Residues His-41 and His-74 each coordinate (2E)-4-hydroxy-3-methylbut-2-enyl diphosphate. Residues His-41 and His-74 each contribute to the dimethylallyl diphosphate site. His-41 and His-74 together coordinate isopentenyl diphosphate. Cys-97 lines the [4Fe-4S] cluster pocket. His-125 provides a ligand contact to (2E)-4-hydroxy-3-methylbut-2-enyl diphosphate. His-125 contributes to the dimethylallyl diphosphate binding site. His-125 is a binding site for isopentenyl diphosphate. Glu-127 (proton donor) is an active-site residue. Residue Thr-168 participates in (2E)-4-hydroxy-3-methylbut-2-enyl diphosphate binding. Cys-198 serves as a coordination point for [4Fe-4S] cluster. Residues Ser-226, Ser-227, Asn-228, and Ser-270 each coordinate (2E)-4-hydroxy-3-methylbut-2-enyl diphosphate. Residues Ser-226, Ser-227, Asn-228, and Ser-270 each contribute to the dimethylallyl diphosphate site. Isopentenyl diphosphate contacts are provided by Ser-226, Ser-227, Asn-228, and Ser-270.

This sequence belongs to the IspH family. As to quaternary structure, homodimer. [4Fe-4S] cluster serves as cofactor.

The catalysed reaction is isopentenyl diphosphate + 2 oxidized [2Fe-2S]-[ferredoxin] + H2O = (2E)-4-hydroxy-3-methylbut-2-enyl diphosphate + 2 reduced [2Fe-2S]-[ferredoxin] + 2 H(+). It catalyses the reaction dimethylallyl diphosphate + 2 oxidized [2Fe-2S]-[ferredoxin] + H2O = (2E)-4-hydroxy-3-methylbut-2-enyl diphosphate + 2 reduced [2Fe-2S]-[ferredoxin] + 2 H(+). The protein operates within isoprenoid biosynthesis; dimethylallyl diphosphate biosynthesis; dimethylallyl diphosphate from (2E)-4-hydroxy-3-methylbutenyl diphosphate: step 1/1. Its pathway is isoprenoid biosynthesis; isopentenyl diphosphate biosynthesis via DXP pathway; isopentenyl diphosphate from 1-deoxy-D-xylulose 5-phosphate: step 6/6. Functionally, catalyzes the conversion of 1-hydroxy-2-methyl-2-(E)-butenyl 4-diphosphate (HMBPP) into a mixture of isopentenyl diphosphate (IPP) and dimethylallyl diphosphate (DMAPP). Acts in the terminal step of the DOXP/MEP pathway for isoprenoid precursor biosynthesis. The protein is 4-hydroxy-3-methylbut-2-enyl diphosphate reductase of Proteus mirabilis (strain HI4320).